Here is a 329-residue protein sequence, read N- to C-terminus: DNA-directed RNA polymerase subunit alpha (329 aa).

The alpha N-terminal domain (alpha-NTD) stretch occupies residues 1 to 234 (MQGSVTEFLK…EQLDAFVELR (234 aa)). The alpha C-terminal domain (alpha-CTD) stretch occupies residues 248-329 (FDPILLRPVD…WPPASLADDL (82 aa)).

This sequence belongs to the RNA polymerase alpha chain family. As to quaternary structure, homodimer. The RNAP catalytic core consists of 2 alpha, 1 beta, 1 beta' and 1 omega subunit. When a sigma factor is associated with the core the holoenzyme is formed, which can initiate transcription.

The catalysed reaction is RNA(n) + a ribonucleoside 5'-triphosphate = RNA(n+1) + diphosphate. Its function is as follows. DNA-dependent RNA polymerase catalyzes the transcription of DNA into RNA using the four ribonucleoside triphosphates as substrates. This Shewanella baltica (strain OS155 / ATCC BAA-1091) protein is DNA-directed RNA polymerase subunit alpha.